Here is a 435-residue protein sequence, read N- to C-terminus: Indole diterpene prenyltransferase atmD (435 aa).

Residues 81–82 (AY) and Glu-90 each bind L-tryptophan. Substrate is bound by residues Arg-103, Lys-190, Arg-261, Lys-263, Tyr-265, Tyr-346, and Tyr-413.

The protein belongs to the tryptophan dimethylallyltransferase family.

In terms of biological role, indole diterpene prenyltransferase; part of the ATM2 gene cluster that mediates the biosynthesis of aflatrem, a tremorgenic mycotoxin with acute neurotoxic effects. Synthesis of geranylgeranyl diphosphate (GGPP) by AtmG (a GGPP synthase) precedes condensation of GGPP with indole 3-glycerol phosphate, followed by epoxidation and cyclization by AtmM (a FAD-dependent monooxygenase) and AtmC (a prenyltransferase) to produce paspaline. AtmB is also essential for paspaline production, but its exact role has not been identified yet. AtmP, a cytochrome P450 monooxygenase, subsequently converts paspaline to 13-desoxypaxilline via PC-M6 by removal of the C-30 methyl group and oxidation at C-10. AtmQ, a cytochrome P450 monooxygenase, then catalyzes the oxidation of 13-desoxypaxilline, first at C-7 to produce paspalicine and then at C-13 to form paspalinine. Finally, AtmD prenylates paspalinine to form aflatrem. This Aspergillus flavus protein is Indole diterpene prenyltransferase atmD.